Here is a 102-residue protein sequence, read N- to C-terminus: Putative toxin YafQ (102 aa).

This sequence belongs to the RelE toxin family. YafQ subfamily.

In terms of biological role, toxic component of a type II toxin-antitoxin (TA) system. Its cognate antitoxin is RelB. The sequence is that of Putative toxin YafQ from Haemophilus influenzae (strain ATCC 51907 / DSM 11121 / KW20 / Rd).